The chain runs to 318 residues: B3 domain-containing protein At1g05930 (318 aa).

The segment at residues Phe201–Arg293 is a DNA-binding region (TF-B3).

It localises to the nucleus. The polypeptide is B3 domain-containing protein At1g05930 (Arabidopsis thaliana (Mouse-ear cress)).